Consider the following 98-residue polypeptide: MALLLALSLLVLWTSPAPTLSGTNDAEDCCLSVTQKPIPGYIVRNFHYLLIKDGCRVPAVVFTTLRGRQLCAPPDQPWVERIIQRLQRTSAKMKRRSS.

The first 21 residues, Met-1–Ser-21, serve as a signal peptide directing secretion. Disulfide bonds link Cys-29/Cys-55 and Cys-30/Cys-71.

This sequence belongs to the intercrine beta (chemokine CC) family. In terms of assembly, interacts with TNFAIP6 (via Link domain). Expressed at high levels in the lymph nodes, thymus and appendix. Intermediate levels seen in colon and trachea, while low levels found in spleen, small intestine, lung, kidney and stomach.

Its subcellular location is the secreted. Functionally, may play a role not only in inflammatory and immunological responses but also in normal lymphocyte recirculation and homing. May play an important role in trafficking of T-cells in thymus, and T-cell and B-cell migration to secondary lymphoid organs. Binds to chemokine receptor CCR7. Recombinant CCL19 shows potent chemotactic activity for T-cells and B-cells but not for granulocytes and monocytes. Binds to atypical chemokine receptor ACKR4 and mediates the recruitment of beta-arrestin (ARRB1/2) to ACKR4. The protein is C-C motif chemokine 19 (CCL19) of Homo sapiens (Human).